The primary structure comprises 462 residues: A-type ATP synthase subunit B (462 aa).

Belongs to the ATPase alpha/beta chains family. As to quaternary structure, has multiple subunits with at least A(3), B(3), C, D, E, F, H, I and proteolipid K(x).

It localises to the cell membrane. Component of the A-type ATP synthase that produces ATP from ADP in the presence of a proton gradient across the membrane. The B chain is a regulatory subunit. The sequence is that of A-type ATP synthase subunit B from Methanococcus maripaludis (strain DSM 14266 / JCM 13030 / NBRC 101832 / S2 / LL).